Here is a 399-residue protein sequence, read N- to C-terminus: Proteasome-activating nucleotidase (399 aa).

Residues 19 to 60 (ITYLKRRIRQLELQVRMLEADKERLERELSRLRSEMSRLRQP) are a coiled coil. ATP contacts are provided by residues 184-189 (GCGKTL) and His323. The interval 397 to 399 (IYG) is docks into pockets in the proteasome alpha-ring to cause gate opening.

This sequence belongs to the AAA ATPase family. In terms of assembly, homohexamer. The hexameric complex has a two-ring architecture resembling a top hat that caps the 20S proteasome core at one or both ends. Upon ATP-binding, the C-terminus of PAN interacts with the alpha-rings of the proteasome core by binding to the intersubunit pockets.

The protein localises to the cytoplasm. ATPase which is responsible for recognizing, binding, unfolding and translocation of substrate proteins into the archaeal 20S proteasome core particle. Is essential for opening the gate of the 20S proteasome via an interaction with its C-terminus, thereby allowing substrate entry and access to the site of proteolysis. Thus, the C-termini of the proteasomal ATPase function like a 'key in a lock' to induce gate opening and therefore regulate proteolysis. Unfolding activity requires energy from ATP hydrolysis, whereas ATP binding alone promotes ATPase-20S proteasome association which triggers gate opening, and supports translocation of unfolded substrates. This is Proteasome-activating nucleotidase from Pyrococcus horikoshii (strain ATCC 700860 / DSM 12428 / JCM 9974 / NBRC 100139 / OT-3).